The sequence spans 212 residues: Adenylate kinase (212 aa).

14 to 19 (GSGKGT) is an ATP binding site. The segment at 34–63 (STGDLFRKKISEDSRFAAQIQNYLSSGSYV) is NMP. AMP-binding positions include threonine 35, arginine 40, 61 to 63 (SYV), 89 to 92 (GYPR), and glutamine 96. The LID stretch occupies residues 126–163 (QRLFCQKCQKSYNLLLAKPKNGLKCDLDNTDLITRNDD). Arginine 127 is an ATP binding site. Zn(2+) is bound by residues cysteine 130 and cysteine 133. 136–137 (SY) provides a ligand contact to ATP. Zn(2+) is bound by residues cysteine 150 and aspartate 153. Residues arginine 160 and arginine 171 each coordinate AMP. Glutamine 199 contacts ATP.

This sequence belongs to the adenylate kinase family. In terms of assembly, monomer.

The protein localises to the cytoplasm. The catalysed reaction is AMP + ATP = 2 ADP. It functions in the pathway purine metabolism; AMP biosynthesis via salvage pathway; AMP from ADP: step 1/1. Functionally, catalyzes the reversible transfer of the terminal phosphate group between ATP and AMP. Plays an important role in cellular energy homeostasis and in adenine nucleotide metabolism. The protein is Adenylate kinase of Mesomycoplasma hyopneumoniae (strain 232) (Mycoplasma hyopneumoniae).